The sequence spans 459 residues: cAMP-dependent protein kinase regulatory subunit (459 aa).

The dimerization and phosphorylation stretch occupies residues 30–219 (QFCANYFNTK…TLANNLKNNF (190 aa)). Disordered regions lie at residues 78 to 109 (VNDR…DTKT) and 125 to 168 (FDVK…PSSK). Residues 95-109 (HSNHDEDPHAKDTKT) show a composition bias toward basic and acidic residues. Residues 146–168 (KPSSSSQPNQQSASASSKTPSSK) show a composition bias toward low complexity. Ser-180 carries the phosphoserine modification. 3',5'-cyclic AMP contacts are provided by residues 220 to 335 (LFKQ…FLKD), Glu-285, Arg-294, 338 to 454 (VLKS…KSQD), Glu-404, and Arg-413.

The protein belongs to the cAMP-dependent kinase regulatory chain family. In terms of assembly, tetramer, composed of 2 regulatory (R) and 2 catalytic (C) subunits. In the presence of cAMP it dissociates into 2 active monomeric C subunits and an R dimer.

The chain is cAMP-dependent protein kinase regulatory subunit (BCY1) from Candida albicans (strain SC5314 / ATCC MYA-2876) (Yeast).